A 569-amino-acid polypeptide reads, in one-letter code: Urease subunit alpha (569 aa).

Residues 131 to 569 (GGIDTHIHFI…LPLAQRYLLL (439 aa)) form the Urease domain. Ni(2+)-binding residues include His-136, His-138, and Lys-219. N6-carboxylysine is present on Lys-219. His-221 is a binding site for substrate. Positions 248 and 274 each coordinate Ni(2+). Catalysis depends on His-322, which acts as the Proton donor. Asp-362 contributes to the Ni(2+) binding site.

It belongs to the metallo-dependent hydrolases superfamily. Urease alpha subunit family. As to quaternary structure, heterotrimer of UreA (gamma), UreB (beta) and UreC (alpha) subunits. Three heterotrimers associate to form the active enzyme. Ni cation is required as a cofactor. In terms of processing, carboxylation allows a single lysine to coordinate two nickel ions.

The protein resides in the cytoplasm. It catalyses the reaction urea + 2 H2O + H(+) = hydrogencarbonate + 2 NH4(+). It functions in the pathway nitrogen metabolism; urea degradation; CO(2) and NH(3) from urea (urease route): step 1/1. This is Urease subunit alpha from Parasynechococcus marenigrum (strain WH8102).